The sequence spans 903 residues: HTH-type transcriptional regulator MalT (903 aa).

39–46 (CPAGYGKT) provides a ligand contact to ATP. The HTH luxR-type domain occupies 832-897 (ELIRTSPLTQ…EAVQQAQRLL (66 aa)). Residues 856–875 (NDQIANELDVAATTIKTHIR) constitute a DNA-binding region (H-T-H motif).

It belongs to the MalT family. As to quaternary structure, monomer in solution. Oligomerizes to an active state in the presence of the positive effectors ATP and maltotriose.

With respect to regulation, activated by ATP and maltotriose, which are both required for DNA binding. Functionally, positively regulates the transcription of the maltose regulon whose gene products are responsible for uptake and catabolism of malto-oligosaccharides. Specifically binds to the promoter region of its target genes, recognizing a short DNA motif called the MalT box. This chain is HTH-type transcriptional regulator MalT, found in Yersinia pseudotuberculosis serotype O:1b (strain IP 31758).